We begin with the raw amino-acid sequence, 368 residues long: E3 ubiquitin-protein ligase E3D (368 aa).

At alanine 2 the chain carries N-acetylalanine. The BRAT1-like motif signature appears at 129–159 (PLPSENWSALVGEWCCHPDPFANRPLHPREN). Cysteine 144 serves as a coordination point for Zn(2+). The interval 214 to 236 (RPSEGSFPNIPRSQFLQSIIAQC) is interaction with UBE2C. Positions 332–368 (LPSATCLELLLILSRNNASLPLSLRQMNSFQVAFLKM) are HECT-like.

In terms of assembly, interacts with UBE2C/UbcH10 (E2 ubiquitin-conjugating enzyme). In vitro, interacts with cyclin-B. Ubiquitinated by UBCH10 (E2 ubiquitin-conjugating enzyme).

The protein localises to the cytoplasm. The catalysed reaction is S-ubiquitinyl-[E2 ubiquitin-conjugating enzyme]-L-cysteine + [acceptor protein]-L-lysine = [E2 ubiquitin-conjugating enzyme]-L-cysteine + N(6)-ubiquitinyl-[acceptor protein]-L-lysine.. It participates in protein modification; protein ubiquitination. E3 ubiquitin-protein ligase which accepts ubiquitin from specific E2 ubiquitin-conjugating enzymes, and transfers it to substrates, generally promoting their degradation by the proteasome. Independently of its E3 ubiquitin-protein ligase activity, acts as an inhibitor of CPSF3 endonuclease activity by blocking CPSF3 active site. This is E3 ubiquitin-protein ligase E3D (Ube3d) from Mus musculus (Mouse).